The chain runs to 470 residues: Choline/ethanolamine transporter flvcr2a (470 aa).

The Cytoplasmic portion of the chain corresponds to 1-23; the sequence is MCDKADNHIDVQPEGNLEVSSVS. Residues 24-48 traverse the membrane as a helical segment; it reads STRLYRRRWVILLLFSSYSLCNAFQ. Residues N45, A46, and W49 each contribute to the choline site. The Extracellular portion of the chain corresponds to 49–66; the sequence is WIQYGIINNIFMKFYQVS. The chain crosses the membrane as a helical span at residues 67–94; sequence SFAVDWLSMVYMLTYIPFIFPVTWLLER. Residues 95-96 are Cytoplasmic-facing; that stretch reads KG. The helical transmembrane segment at 97 to 116 threads the bilayer; that stretch reads LRVVALLAASINCAGTWIKV. The Extracellular portion of the chain corresponds to 117 to 123; that stretch reads ASVQPSL. A helical membrane pass occupies residues 124–152; that stretch reads FWVTMLGQFACSCAQVFILGMPSQVASVW. Choline-binding residues include Q138 and L142. Over 153–157 the chain is Cytoplasmic; sequence FGSDE. Residues 158–183 form a helical membrane-spanning segment; it reads VSTACAIGVFGNQLGIAIGFLVPPVL. At 184-188 the chain is on the extracellular side; the sequence is VPNVE. The chain crosses the membrane as a helical span at residues 189-218; it reads DMGELAEHISIMFYITAAVATLIFLLVVFV. Topologically, residues 219-254 are cytoplasmic; sequence FQEKPETPPSLAQVALRNMPTGQHSYLASIARLMCN. A helical transmembrane segment spans residues 255 to 285; sequence KPFILLLISYGLNVGSFYAVSTLLNRMIIEH. A choline-binding site is contributed by Y272. Residues 286–289 lie on the Extracellular side of the membrane; the sequence is YPGE. Residues 290-318 form a helical membrane-spanning segment; sequence EVNAGRIGLTLVVAGVVGSLICGVWLDKT. Residues 319 to 320 are Cytoplasmic-facing; the sequence is KT. The chain crosses the membrane as a helical span at residues 321–343; it reads YKQTTLSVYLLSFVGMLIYSFTL. Residues 344-346 lie on the Extracellular side of the membrane; sequence NLG. Residues 347–376 traverse the membrane as a helical segment; it reads HLWLVFLTSGVLGFFMTGYLPLGFEFAVEL. Residues 377–384 lie on the Cytoplasmic side of the membrane; that stretch reads TYPESEGT. Residues 385–410 traverse the membrane as a helical segment; the sequence is SSGLLNCSAQVFGIAFTIIQGKIIDH. Q394 is a binding site for choline. The Extracellular portion of the chain corresponds to 411 to 412; that stretch reads FG. Residues 413 to 435 traverse the membrane as a helical segment; the sequence is TLAGNIFLCVFLLIGSIMTAFIK. The Cytoplasmic segment spans residues 436-470; it reads SDLRRQKANQETGGNADSSVHPQHGETLPVKEVKM. Residues 445-456 are compositionally biased toward polar residues; that stretch reads QETGGNADSSVH. The interval 445–470 is disordered; the sequence is QETGGNADSSVHPQHGETLPVKEVKM.

The protein belongs to the major facilitator superfamily. Feline leukemia virus subgroup C receptor (TC 2.A.1.28.1) family.

Its subcellular location is the cell membrane. It is found in the mitochondrion membrane. It localises to the endoplasmic reticulum membrane. The enzyme catalyses choline(out) = choline(in). It catalyses the reaction ethanolamine(in) = ethanolamine(out). It carries out the reaction heme b(in) = heme b(out). Functionally, choline uniporter that specifically mediates choline uptake at the blood-brain-barrier. Responsible for the majority of choline uptake across the blood-brain-barrier from the circulation into the brain. Choline, a nutrient critical for brain development, is a precursor of phosphatidylcholine, as well as betaine. Also mediates transport of ethanolamine. Choline and ethanolamine transport is not coupled with proton transport and is exclusively driven by the choline gradient across the plasma membrane. Also acts as a heme b transporter. This chain is Choline/ethanolamine transporter flvcr2a, found in Danio rerio (Zebrafish).